Consider the following 328-residue polypeptide: Beta-ketoacyl-[acyl-carrier-protein] synthase III (328 aa).

Residues Cys-122 and His-255 contribute to the active site. The tract at residues 256-260 is ACP-binding; the sequence is QANIR. Asn-285 is a catalytic residue.

This sequence belongs to the thiolase-like superfamily. FabH family. As to quaternary structure, homodimer.

The protein resides in the cytoplasm. The enzyme catalyses malonyl-[ACP] + acetyl-CoA + H(+) = 3-oxobutanoyl-[ACP] + CO2 + CoA. It participates in lipid metabolism; fatty acid biosynthesis. Its function is as follows. Catalyzes the condensation reaction of fatty acid synthesis by the addition to an acyl acceptor of two carbons from malonyl-ACP. Catalyzes the first condensation reaction which initiates fatty acid synthesis and may therefore play a role in governing the total rate of fatty acid production. Possesses both acetoacetyl-ACP synthase and acetyl transacylase activities. Its substrate specificity determines the biosynthesis of branched-chain and/or straight-chain of fatty acids. The protein is Beta-ketoacyl-[acyl-carrier-protein] synthase III of Janthinobacterium sp. (strain Marseille) (Minibacterium massiliensis).